The chain runs to 417 residues: NADH-quinone oxidoreductase subunit D (417 aa).

Belongs to the complex I 49 kDa subunit family. As to quaternary structure, NDH-1 is composed of 14 different subunits. Subunits NuoB, C, D, E, F, and G constitute the peripheral sector of the complex.

The protein resides in the cell inner membrane. The catalysed reaction is a quinone + NADH + 5 H(+)(in) = a quinol + NAD(+) + 4 H(+)(out). In terms of biological role, NDH-1 shuttles electrons from NADH, via FMN and iron-sulfur (Fe-S) centers, to quinones in the respiratory chain. The immediate electron acceptor for the enzyme in this species is believed to be ubiquinone. Couples the redox reaction to proton translocation (for every two electrons transferred, four hydrogen ions are translocated across the cytoplasmic membrane), and thus conserves the redox energy in a proton gradient. The protein is NADH-quinone oxidoreductase subunit D of Hydrogenovibrio crunogenus (strain DSM 25203 / XCL-2) (Thiomicrospira crunogena).